The sequence spans 501 residues: ADP,ATP carrier protein 3 (501 aa).

A run of 12 helical transmembrane segments spans residues 23 to 43 (LKLFIPMALMMLCILFNFGAL), 59 to 79 (IISFLKLWLVLPSCVIFTILY), 90 to 110 (YIFYSIVGTFLLFFLLFAYII), 146 to 166 (YALMYIFSELWSAVVINLMFW), 183 to 203 (PVLGMVGNIGLIIAGSVLVFF), 227 to 247 (IMLQPIISIIVTAGIIAMFLF), 293 to 313 (IALLIICYGLLINIVEGPWKA), 326 to 346 (VNFMGMFNIWMGISCVTFMII), 361 to 381 (LLTPIMLSITGFMFFIFIIFI), 383 to 403 (EIGTCFGDFNLLYVAIIVGAI), 446 to 466 (FGKSLGAFIQSLIFIIIPTAT), and 470 to 490 (IIIYLLVIFIVMMNLWIWNII).

This sequence belongs to the ADP/ATP translocase tlc family.

The protein localises to the cell membrane. In terms of biological role, provides the rickettsial cell with host ATP in exchange for rickettsial ADP. This is an obligate exchange system. This energy acquiring activity is an important component of rickettsial parasitism. The sequence is that of ADP,ATP carrier protein 3 (tlcC) from Rickettsia prowazekii (strain Madrid E).